The sequence spans 273 residues: Putative phosphoenolpyruvate synthase regulatory protein (273 aa).

153–160 (GVSRSGKT) contributes to the ADP binding site.

The protein belongs to the pyruvate, phosphate/water dikinase regulatory protein family. PSRP subfamily.

It catalyses the reaction [pyruvate, water dikinase] + ADP = [pyruvate, water dikinase]-phosphate + AMP + H(+). The catalysed reaction is [pyruvate, water dikinase]-phosphate + phosphate + H(+) = [pyruvate, water dikinase] + diphosphate. Bifunctional serine/threonine kinase and phosphorylase involved in the regulation of the phosphoenolpyruvate synthase (PEPS) by catalyzing its phosphorylation/dephosphorylation. This is Putative phosphoenolpyruvate synthase regulatory protein from Variovorax paradoxus (strain S110).